The chain runs to 977 residues: Dynamin-like GTPase OPA1, mitochondrial (977 aa).

A mitochondrion-targeting transit peptide spans 1–86 (MWRTKAAAAC…VKYGYQSYRN (86 aa)). Over 87 to 95 (FWLARLASR) the chain is Mitochondrial matrix. Residues 96–112 (LLKIRYLILGSAVGGGY) traverse the membrane as a helical segment. Residues 113–787 (TAKKTYDQWE…SVIEDMVGPD (675 aa)) are Mitochondrial intermembrane-facing. Residues 224–271 (KKVSDKEKIDQLQEELLRTQLKYQRMLERLEKENKELRKLVLQRDDKG) are a coiled coil. One can recognise a Dynamin-type G domain in the interval 302-578 (QDHLPRVVVV…FWKMVRESVE (277 aa)). Residues 312 to 319 (GDQSAGKT) form a G1 motif region. 6 residues coordinate GTP: Ser315, Gly317, Lys318, Thr319, Ser320, and Gly334. Thr319 is a Mg(2+) binding site. The tract at residues 338–341 (MMTR) is G2 motif. The Mg(2+) site is built by Thr340 and Asp415. A G3 motif region spans residues 415–418 (DLPG). The G4 motif stretch occupies residues 484 to 487 (TKVD). GTP-binding residues include Lys485, Asp487, and Thr520. Positions 518-521 (VVTG) are G5 motif. Stalk region stretches follow at residues 606–853 (DRNE…IKDT) and 891–945 (CNDI…VKLL). Positions 753 to 873 (SDKQQWDAAI…KTALNHCNLC (121 aa)) are paddle region. The stretch at 788 to 798 (WKKRWLYWISR) is an intramembrane region. Over 799–977 (TKEQNIRNET…AFIEALHQEK (179 aa)) the chain is Mitochondrial intermembrane. Cys873 and Cys891 form a disulfide bridge. A coiled-coil region spans residues 911 to 977 (LRQQLTNTEV…AFIEALHQEK (67 aa)).

It belongs to the TRAFAC class dynamin-like GTPase superfamily. Dynamin/Fzo/YdjA family. In terms of assembly, oligomeric complex consisting of membrane-bound and soluble forms of OPA1. In terms of processing, cleaved by OMA1 or YME1L downstream of the transmembrane region in response to different signals to generate soluble forms. Cleaved by OMA1 at position S1 following stress conditions, generating the short soluble form (Dynamin-like GTPase OPA1, short form; S-OPA1).

The protein resides in the mitochondrion inner membrane. The protein localises to the mitochondrion intermembrane space. It catalyses the reaction GTP + H2O = GDP + phosphate + H(+). Its function is as follows. Dynamin-related GTPase that is essential for normal mitochondrial morphology by mediating fusion of the mitochondrial inner membranes, regulating cristae morphology and maintaining respiratory chain function. Exists in two forms: the transmembrane, long form (Dynamin-like GTPase OPA1, long form; L-OPA1), which is tethered to the inner mitochondrial membrane, and the short soluble form (Dynamin-like GTPase OPA1, short form; S-OPA1), which results from proteolytic cleavage and localizes in the intermembrane space. Both forms (L-OPA1 and S-OPA1) cooperate to catalyze the fusion of the mitochondrial inner membrane. The equilibrium between L-OPA1 and S-OPA1 is essential: excess levels of S-OPA1, produced by cleavage by OMA1 following loss of mitochondrial membrane potential, lead to an impaired equilibrium between L-OPA1 and S-OPA1, inhibiting mitochondrial fusion. The balance between L-OPA1 and S-OPA1 also influences cristae shape and morphology. Its role in mitochondrial morphology is required for mitochondrial genome maintenance. Functionally, constitutes the transmembrane long form (L-OPA1) that plays a central role in mitochondrial inner membrane fusion and cristae morphology. L-OPA1 and the soluble short form (S-OPA1) form higher-order helical assemblies that coordinate the fusion of mitochondrial inner membranes. Inner membrane-anchored L-OPA1 molecules initiate membrane remodeling by recruiting soluble S-OPA1 to rapidly polymerize into a flexible cylindrical scaffold encaging the mitochondrial inner membrane. Once at the membrane surface, the formation of S-OPA1 helices induce bilayer curvature. OPA1 dimerization through the paddle region, which inserts into cardiolipin-containing membrane, promotes GTP hydrolysis and the helical assembly of a flexible OPA1 lattice on the membrane, which drives membrane curvature and mitochondrial fusion. Plays a role in the maintenance and remodeling of mitochondrial cristae, some invaginations of the mitochondrial inner membrane that provide an increase in the surface area. Probably acts by forming helical filaments at the inside of inner membrane tubes with the shape and dimensions of crista junctions. Constitutes the soluble short form (S-OPA1) generated by cleavage by OMA1, which plays a central role in mitochondrial inner membrane fusion and cristae morphology. The transmembrane long form (L-OPA1) and the S-OPA1 form higher-order helical assemblies that coordinate the fusion of mitochondrial inner membranes. Inner membrane-anchored L-OPA1 molecules initiate membrane remodeling by recruiting soluble S-OPA1 to rapidly polymerize into a flexible cylindrical scaffold encaging the mitochondrial inner membrane. Once at the membrane surface, the formation of S-OPA1 helices induce bilayer curvature. OPA1 dimerization through the paddle region, which inserts into cardiolipin-containing membrane, promotes GTP hydrolysis and the helical assembly of a flexible OPA1 lattice on the membrane, which drives membrane curvature and mitochondrial fusion. Excess levels of S-OPA1 produced by cleavage by OMA1 following stress conditions that induce loss of mitochondrial membrane potential, lead to an impaired equilibrium between L-OPA1 and S-OPA1, thereby inhibiting mitochondrial fusion. Plays a role in the maintenance and remodeling of mitochondrial cristae, some invaginations of the mitochondrial inner membrane that provide an increase in the surface area. Probably acts by forming helical filaments at the inside of inner membrane tubes with the shape and dimensions of crista junctions. The sequence is that of Dynamin-like GTPase OPA1, mitochondrial from Gallus gallus (Chicken).